Consider the following 238-residue polypeptide: Cysteine-rich venom protein 1 (238 aa).

Residues 1-19 form the signal peptide; the sequence is MIAFIVLLSLAAVLQQSSG. The SCP domain maps to 38 to 164; the sequence is VDKHNALRRS…STKYLYVCQY (127 aa). Disulfide bonds link C75–C153, C92–C165, C148–C162, C184–C191, C187–C196, C200–C233, C209–C227, and C218–C231. A ShKT domain is found at 200–233; sequence CEYEDTFSNCKALAKKTKCKTEWIKSKCPATCFC.

This sequence belongs to the CRISP family. In terms of tissue distribution, expressed by the venom gland.

The protein resides in the secreted. In terms of biological role, blocks contraction of smooth muscle elicited by high potassium-induced depolarization, but does not block caffeine-stimulated contraction. May target voltage-gated calcium channels on smooth muscle. This chain is Cysteine-rich venom protein 1, found in Hydrophis hardwickii (Hardwick's spine-bellied seasnake).